The sequence spans 278 residues: tRNA (guanine-N(7)-)-methyltransferase (278 aa).

S-adenosyl-L-methionine is bound by residues Gly63, 86–87 (EL), 119–120 (NA), and Leu139. Residue Asp142 is part of the active site. Residue 217–219 (TEE) participates in S-adenosyl-L-methionine binding. The interval 259–278 (IDSTTTTTTSTATITEVESK) is disordered. Residues 261–278 (STTTTTTSTATITEVESK) show a composition bias toward low complexity.

The protein belongs to the class I-like SAM-binding methyltransferase superfamily. TrmB family.

The protein localises to the nucleus. It carries out the reaction guanosine(46) in tRNA + S-adenosyl-L-methionine = N(7)-methylguanosine(46) in tRNA + S-adenosyl-L-homocysteine. Its pathway is tRNA modification; N(7)-methylguanine-tRNA biosynthesis. Functionally, catalyzes the formation of N(7)-methylguanine at position 46 (m7G46) in tRNA. The chain is tRNA (guanine-N(7)-)-methyltransferase (mettl1) from Dictyostelium discoideum (Social amoeba).